Reading from the N-terminus, the 1693-residue chain is Non-structural polyprotein pORF1 (1693 aa).

The 185-residue stretch at 56-240 folds into the Alphavirus-like MT domain; it reads VFRPEVFWNH…HDVSNLRSWI (185 aa). Residues 241-439 are Y-domain; sequence RTTKVTGDHP…FYAQCRRWLS (199 aa). A disulfide bridge connects residues C434 and C481. The tract at residues 442–509 is protease; sequence FHLDPRVLVF…EAYEGSDVDP (68 aa). The zinc-binding stretch occupies residues 510–691; the sequence is AESAISDISG…FSPGHVWESA (182 aa). Zn(2+) contacts are provided by H671, E673, and H686. Residues 712 to 770 form a hinge region; the sequence is SSPAQPDLGFISEPSIPSRAATLTPAAPLPPPAPDPSPTPSAPARGEPAPGATARAPAI. The disordered stretch occupies residues 732–768; sequence ATLTPAAPLPPPAPDPSPTPSAPARGEPAPGATARAP. Pro residues predominate over residues 738 to 752; sequence APLPPPAPDPSPTPS. The Macro domain maps to 775 to 921; sequence ARHRRLLFTY…LYLPELAARW (147 aa). In terms of domain architecture, (+)RNA virus helicase ATP-binding spans 934 to 1082; sequence ITEDVARTAN…RPDLAPTSWW (149 aa). An NTPase/helicase region spans residues 960–1204; sequence GCRVTPGVVQ…ISDAIVNNFF (245 aa). 975–982 contributes to the ATP binding site; sequence GVPGSGKS. A (+)RNA virus helicase C-terminal domain is found at 1083–1216; that stretch reads HVTHRCPADV…GGEIGHQRPS (134 aa). The interval 1207-1693 is RNA-directed RNA polymerase; it reads GGEIGHQRPS…LTNSILCRVE (487 aa). In terms of domain architecture, RdRp catalytic spans 1454 to 1565; sequence SMVFENDFSE…LCSEYRQSPG (112 aa).

The protein belongs to the hepevirus non-structural polyprotein family. The protease domain interacts with host EIF2AK4 (via C-terminus); this interaction inhibits dimerization of EIF2AK4 and prevents EIF2AK4-mediated phosphorylation of host EIF2A. Mg(2+) is required as a cofactor. ORF1 polyprotein does not seem to be processed into distinct enzymatic domains by a viral protease belonging to ORF1, but could be processed by a host serine protease like thrombin.

The protein localises to the host cytoplasm. It is found in the host perinuclear region. It carries out the reaction GTP + S-adenosyl-L-methionine = N(7)-methyl-GTP + S-adenosyl-L-homocysteine. It catalyses the reaction RNA(n) + a ribonucleoside 5'-triphosphate = RNA(n+1) + diphosphate. Putative protease: Inhibited by chymostatin. Methyltransferase: Displays a capping enzyme activity. This function is necessary since all viral RNAs are synthesized in the cytoplasm, and host capping enzymes are restricted to the nucleus. The enzymatic reaction involves a covalent link between 7-methyl-GMP and the methyltransferase, whereas eukaryotic capping enzymes form a covalent complex only with GMP. Methyltransferase catalyzes transfer of a methyl group from S-adenosylmethionine to GTP and GDP to yield m(7)GTP or m(7)GDP. GDP is a better substrate than GTP. This enzyme also displays guanylyltransferase activity to form a covalent complex, methyltransferase-m(7)GMP, from which 7-methyl-GMP is transferred to the mRNA to create the cap structure. Its function is as follows. Y-domain: Indispensable for virus replication. Functionally, putative protease: The putative protease domain, although necessary for replication of the virus, may not be a protease but rather a structural Zn(2+)-binding domain. Inhibits induction of IFN-beta by MDA5 and RIG-I pathways and down-regulates the expression of MDA5. In terms of biological role, NTPase/helicase: Multi-functional protein that exhibits NTPase and RNA unwinding activities. Hydrolyzes all NTPs efficiently and unwinds RNA duplexes containing 5' overhangs. Possesses a sequence independent RNA-5'-triphosphatase (RTPase) activity suggestive of its role in forming viral cap structure. Also participates in viral genome replication, RNA translocation and genome packaging/unpackaging. RNA-directed RNA polymerase: Plays an essential role in the virus replication. Binds to the 3'-end of the genomic RNA to initiate viral replication. In Homo sapiens (Human), this protein is Non-structural polyprotein pORF1.